The chain runs to 521 residues: GMP synthase [glutamine-hydrolyzing] (521 aa).

In terms of domain architecture, Glutamine amidotransferase type-1 spans 5–197; that stretch reads KILILDFGSQ…VLDICGAQPG (193 aa). Cysteine 81 acts as the Nucleophile in catalysis. Catalysis depends on residues histidine 171 and glutamate 173. The GMPS ATP-PPase domain maps to 198 to 390; sequence WTMPNYIEEA…LGLPREMVYR (193 aa). 225–231 is a binding site for ATP; it reads SGGVDSS.

As to quaternary structure, homodimer.

It catalyses the reaction XMP + L-glutamine + ATP + H2O = GMP + L-glutamate + AMP + diphosphate + 2 H(+). It participates in purine metabolism; GMP biosynthesis; GMP from XMP (L-Gln route): step 1/1. Catalyzes the synthesis of GMP from XMP. This chain is GMP synthase [glutamine-hydrolyzing] (guaA), found in Neisseria meningitidis serogroup B (strain ATCC BAA-335 / MC58).